Reading from the N-terminus, the 205-residue chain is Pyridoxal 5'-phosphate synthase subunit PdxT (205 aa).

Residue 54–56 (GES) participates in L-glutamine binding. C86 serves as the catalytic Nucleophile. Residues R118 and 147–148 (IR) contribute to the L-glutamine site. Catalysis depends on charge relay system residues H183 and E185.

The protein belongs to the glutaminase PdxT/SNO family. As to quaternary structure, in the presence of PdxS, forms a dodecamer of heterodimers. Only shows activity in the heterodimer.

The enzyme catalyses aldehydo-D-ribose 5-phosphate + D-glyceraldehyde 3-phosphate + L-glutamine = pyridoxal 5'-phosphate + L-glutamate + phosphate + 3 H2O + H(+). It catalyses the reaction L-glutamine + H2O = L-glutamate + NH4(+). It functions in the pathway cofactor biosynthesis; pyridoxal 5'-phosphate biosynthesis. Catalyzes the hydrolysis of glutamine to glutamate and ammonia as part of the biosynthesis of pyridoxal 5'-phosphate. The resulting ammonia molecule is channeled to the active site of PdxS. This Nitrosopumilus maritimus (strain SCM1) protein is Pyridoxal 5'-phosphate synthase subunit PdxT.